Here is a 312-residue protein sequence, read N- to C-terminus: Malate dehydrogenase (312 aa).

NAD(+) is bound by residues 12–17 and aspartate 36; that span reads GAGFTG. Residues arginine 87 and arginine 93 each coordinate substrate. Residues asparagine 100 and 123 to 125 contribute to the NAD(+) site; that span reads LTN. Asparagine 125 provides a ligand contact to substrate. Serine 149 carries the post-translational modification Phosphoserine. Substrate is bound at residue arginine 156. The Proton acceptor role is filled by histidine 180.

It belongs to the LDH/MDH superfamily. MDH type 3 family.

The enzyme catalyses (S)-malate + NAD(+) = oxaloacetate + NADH + H(+). Its function is as follows. Catalyzes the reversible oxidation of malate to oxaloacetate. The protein is Malate dehydrogenase of Bacillus anthracis (strain A0248).